The chain runs to 209 residues: Protein phosphotransferase ChpT (209 aa).

H22 carries the phosphohistidine modification.

It belongs to the ChpT phosphotransferase family. As to quaternary structure, homodimer. Forms an asymmetric heterotetramer with CtrA (2:2). There are at least two modes of interaction between ChpT and CtrA, only one of which is competent to catalyze His-Asp phosphoryl transfer. Is phosphorylated by CckA-P on His-22.

It is found in the cytoplasm. Its function is as follows. Component of a regulatory phosphorelay system that controls B.abortus cell growth, division, and intracellular survival inside mammalian host cells. This signaling pathway is composed of CckA, ChpT, CtrA and CpdR. ChpT efficiently and specifically shuttles phosphoryl groups from the CckA kinase to the receiver domains of both CtrA and CpdR. Does not bind ATP. Overexpression of chpT results in a defect in cell morphology, DNA content, and intracellular survival in human macrophages. The protein is Protein phosphotransferase ChpT of Brucella abortus (strain 2308).